The following is a 321-amino-acid chain: Cytochrome f (321 aa).

The N-terminal stretch at 1 to 35 is a signal peptide; that stretch reads MQNRKTYDDWVKKWITQSISVLIMIDIMTRTSIAN. The heme site is built by tyrosine 37, cysteine 57, cysteine 60, and histidine 61. The chain crosses the membrane as a helical span at residues 287-307; that stretch reads VQGLLLFLASVVLAQIFLVLK.

It belongs to the cytochrome f family. The 4 large subunits of the cytochrome b6-f complex are cytochrome b6, subunit IV (17 kDa polypeptide, petD), cytochrome f and the Rieske protein, while the 4 small subunits are PetG, PetL, PetM and PetN. The complex functions as a dimer. Heme serves as cofactor.

The protein localises to the plastid. It is found in the chloroplast thylakoid membrane. In terms of biological role, component of the cytochrome b6-f complex, which mediates electron transfer between photosystem II (PSII) and photosystem I (PSI), cyclic electron flow around PSI, and state transitions. This chain is Cytochrome f, found in Cryptomeria japonica (Japanese cedar).